Reading from the N-terminus, the 129-residue chain is Probable cytochrome b5 2 (129 aa).

Positions E3–L79 constitute a Cytochrome b5 heme-binding domain. Residues H38 and H62 each coordinate heme. A helical membrane pass occupies residues V105–K125.

The protein belongs to the cytochrome b5 family.

Its subcellular location is the endoplasmic reticulum membrane. The protein resides in the microsome membrane. The protein localises to the mitochondrion. Its function is as follows. Membrane bound hemoprotein which function as an electron carrier for several membrane bound oxygenases. This is Probable cytochrome b5 2 (oca8) from Schizosaccharomyces pombe (strain 972 / ATCC 24843) (Fission yeast).